A 457-amino-acid chain; its full sequence is Elongation factor 1-alpha (457 aa).

Position 2 is a n,N,N-trimethylglycine (G2). An N6,N6-dimethyllysine; alternate modification is found at K3. K3 is modified (N6-methyllysine; alternate). Residues 5 to 240 enclose the tr-type G domain; the sequence is KTHVNVVVIG…DAIEPPVRPS (236 aa). The G1 stretch occupies residues 14-21; that stretch reads GHVDSGKS. A GTP-binding site is contributed by 14-21; that stretch reads GHVDSGKS. At K30 the chain carries N6-methyllysine. The interval 70 to 74 is G2; that stretch reads GITID. At K79 the chain carries N6,N6,N6-trimethyllysine. The interval 91–94 is G3; sequence DAPG. GTP is bound by residues 91–95 and 153–156; these read DAPGH and NKMD. The interval 153–156 is G4; it reads NKMD. Residues 192–194 are G5; the sequence is SGW. K316 is modified (N6,N6-dimethyllysine; alternate). The residue at position 316 (K316) is an N6-methyllysine; alternate. K389 carries the post-translational modification N6-methyllysine.

The protein belongs to the TRAFAC class translation factor GTPase superfamily. Classic translation factor GTPase family. EF-Tu/EF-1A subfamily.

The protein localises to the cytoplasm. Its function is as follows. This protein promotes the GTP-dependent binding of aminoacyl-tRNA to the A-site of ribosomes during protein biosynthesis. This Mucor circinelloides f. lusitanicus (Mucor racemosus var. lusitanicus) protein is Elongation factor 1-alpha (TEF-3).